Reading from the N-terminus, the 774-residue chain is Ras and Rab interactor 1 (774 aa).

Met-1 carries the N-acetylmethionine modification. The disordered stretch occupies residues 1–52 (MEDPGETEAHPLGATSLNFVPGYQQEEKPSPDPLYDTPDARGVQAGGSQQPA). Ser-16 is subject to Phosphoserine. Residue Tyr-35 is modified to Phosphotyrosine; by ABL1 and ABL2. The SH2 domain maps to 68–162 (WLQLRANAAA…ILLLPLPLPR (95 aa)). Disordered regions lie at residues 188–211 (LNTK…RSPQ) and 249–342 (STET…RPRH). A phosphoserine mark is found at Ser-209, Ser-257, Ser-330, and Ser-334. The segment covering 256–268 (LSPPAVPPPPVPV) has biased composition (pro residues). A compositionally biased stretch (low complexity) spans 327–337 (SSGSPTTSPRL). Ser-351 is modified (phosphoserine; by PKD/PRKD1). A VPS9 domain is found at 456–598 (LSTDGSLGRL…LSGLSQAHAL (143 aa)). The residue at position 609 (Ser-609) is a Phosphoserine. The Ras-associating domain maps to 624–706 (FQHLLRVAYQ…GYLIYRRAER (83 aa)). Arg-692 carries the omega-N-methylarginine modification. The span at 704–766 (AERPETQRAA…GHMQLEEQKA (63 aa)) shows a compositional bias: basic and acidic residues. The tract at residues 704 to 774 (AERPETQRAA…KAEGCPALEE (71 aa)) is disordered.

The protein belongs to the RIN (Ras interaction/interference) family. Interacts with the GTP-bound form of Ras proteins (NRAS, HRAS and KRAS). This interaction prevents the association between RAF1 and Ras. Interacts with 14-3-3 proteins YWHAB, YWHAE and YWHAZ when phosphorylated on Ser-351. Interacts with the SH3 domain of ABL1 and ABL2. Interacts with RAB5A. The interaction with Ras is probably regulated and antagonized by the interaction with 14-3-3 proteins. The interaction with 14-3-3 proteins is regulated by phosphorylation on Ser-351. Post-translationally, phosphorylated on tyrosine residues by ABL1 and ABL2. Phosphorylation at Ser-351 by PRKD1 induces interaction with 14-3-3 proteins.

It is found in the cytoplasm. Its subcellular location is the membrane. The protein resides in the cytoskeleton. Functionally, ras effector protein, which may serve as an inhibitory modulator of neuronal plasticity in aversive memory formation. Can affect Ras signaling at different levels. First, by competing with RAF1 protein for binding to activated Ras. Second, by enhancing signaling from ABL1 and ABL2, which regulate cytoskeletal remodeling. Third, by activating RAB5A, possibly by functioning as a guanine nucleotide exchange factor (GEF) for RAB5A, by exchanging bound GDP for free GTP, and facilitating Ras-activated receptor endocytosis. This Rattus norvegicus (Rat) protein is Ras and Rab interactor 1 (Rin1).